A 1571-amino-acid chain; its full sequence is Neurexin-3 (1571 aa).

The signal sequence occupies residues 1 to 27 (MSFTLHSVFFTLKVSIFLGSLVGLCLG). The Laminin G-like 1 domain occupies 28 to 202 (LEFMGLPNQW…SVQLEAEGPC (175 aa)). Residues 28–1496 (LEFMGLPNQW…EVIRESSSTT (1469 aa)) are Extracellular-facing. Residues N58 and N105 are each glycosylated (N-linked (GlcNAc...) asparagine). Residues 198 to 235 (AEGPCGERPCENGGICFLLDGHPTCDCSTTGYGGTLCS) form the EGF-like 1 domain. Disulfide bonds link C202/C213, C207/C222, and C224/C234. Laminin G-like domains follow at residues 258-440 (VATF…VFKC) and 447-639 (DPIN…KSSC). Residues D304, L321, and M374 each coordinate Ca(2+). 5 disulfides stabilise this stretch: C404–C440, C610–C639, C647–C658, C652–C667, and C669–C679. The 38-residue stretch at 643–680 (SAKQCDSYPCKNNAVCKDGWNRFICDCTGTGYWGRTCE) folds into the EGF-like 2 domain. Laminin G-like domains lie at 685–857 (ILSY…IDYC) and 871–1046 (DPVT…ERGC). Residues D732 and L749 each coordinate Ca(2+). N757 is a glycosylation site (N-linked (GlcNAc...) asparagine). R807 contacts Ca(2+). Cystine bridges form between C1018/C1046, C1053/C1064, C1058/C1073, and C1075/C1085. The 38-residue stretch at 1049–1086 (PSTTCQEDSCANQGVCMQQWEGFTCDCSMTSYSGNQCN) folds into the EGF-like 3 domain. Residues 1090–1290 (ATYIFGKSGG…NPNIKINGSV (201 aa)) form the Laminin G-like 6 domain. Ca(2+) contacts are provided by D1142 and I1159. N1189 is a glycosylation site (N-linked (GlcNAc...) asparagine). Positions 1241 and 1243 each coordinate Ca(2+). 2 N-linked (GlcNAc...) asparagine glycosylation sites follow: N1287 and N1331. Positions 1324–1348 (ATTTTRKNRSTASIQPTSDDLVSSA) are disordered. A compositionally biased stretch (polar residues) spans 1333-1348 (STASIQPTSDDLVSSA). S1347 carries an O-linked (Xyl...) (heparan sulfate) serine glycan. Residues 1497-1517 (GMVVGIVAAAALCILILLYAM) form a helical membrane-spanning segment. The Cytoplasmic portion of the chain corresponds to 1518 to 1571 (YKYRNRDEGSYQVDETRNYISNSAQSNGTLMKEKQASSKSGHKKQKNKDKEYYV). Positions 1539–1571 (NSAQSNGTLMKEKQASSKSGHKKQKNKDKEYYV) are disordered.

The protein belongs to the neurexin family. As to quaternary structure, the laminin G-like domain 2 binds to NXPH1. Specific isoforms bind to alpha-dystroglycan. The cytoplasmic C-terminal region binds to CASK. Specific isoforms bind neuroligins NLGN1, NLGN2 and NLGN3. Interacts with CLSTN3. O-glycosylated; contains heparan sulfate. Heparan sulfate attachment is required for synapse development by mediating interactions with neuroligins. In terms of tissue distribution, brain and arteries (at protein level).

The protein localises to the presynaptic cell membrane. Functionally, neuronal cell surface protein that may be involved in cell recognition and cell adhesion. May mediate intracellular signaling. The protein is Neurexin-3 (Nrxn3) of Mus musculus (Mouse).